Consider the following 79-residue polypeptide: ESX secretion system protein YukD (79 aa).

Belongs to the EsaB family.

Functionally, required for YukE secretion. Probable component or regulator of the ESX/ESAT-6-like secretion system (BsEss). In Bacillus subtilis (strain 168), this protein is ESX secretion system protein YukD (yukD).